The chain runs to 317 residues: Methionyl-tRNA formyltransferase (317 aa).

A (6S)-5,6,7,8-tetrahydrofolate-binding site is contributed by 112 to 115; the sequence is SLLP.

Belongs to the Fmt family.

It catalyses the reaction L-methionyl-tRNA(fMet) + (6R)-10-formyltetrahydrofolate = N-formyl-L-methionyl-tRNA(fMet) + (6S)-5,6,7,8-tetrahydrofolate + H(+). Functionally, attaches a formyl group to the free amino group of methionyl-tRNA(fMet). The formyl group appears to play a dual role in the initiator identity of N-formylmethionyl-tRNA by promoting its recognition by IF2 and preventing the misappropriation of this tRNA by the elongation apparatus. This is Methionyl-tRNA formyltransferase from Mycoplasma mycoides subsp. mycoides SC (strain CCUG 32753 / NCTC 10114 / PG1).